A 403-amino-acid polypeptide reads, in one-letter code: Queuine tRNA-ribosyltransferase catalytic subunit 1 (403 aa).

N-acetylalanine is present on Ala-2. Asp-105 (proton acceptor) is an active-site residue. A queuine-binding site is contributed by 105–109 (DSGGF). Ser-139 carries the phosphoserine modification. 3 residues coordinate queuine: Asp-159, Gln-202, and Gly-229. Residues 260-266 (GVGYATD) are RNA binding. The active-site Nucleophile is Asp-279. Residues 284–288 (TRTAR) are RNA binding; important for wobble base 34 recognition. Residues Cys-317, Cys-319, Cys-322, and His-348 each contribute to the Zn(2+) site.

The protein belongs to the queuine tRNA-ribosyltransferase family. As to quaternary structure, heterodimer of a catalytic subunit QTRT1 and an accessory subunit QTRT2. The cofactor is Zn(2+). Expressed in brain, heart, kidney, liver, ling, skeletal muscle, spleen and testis.

It localises to the cytoplasm. It is found in the mitochondrion outer membrane. The protein resides in the nucleus. The catalysed reaction is guanosine(34) in tRNA + queuine = queuosine(34) in tRNA + guanine. Functionally, catalytic subunit of the queuine tRNA-ribosyltransferase (TGT) that catalyzes the base-exchange of a guanine (G) residue with queuine (Q) at position 34 (anticodon wobble position) in tRNAs with GU(N) anticodons (tRNA-Asp, -Asn, -His and -Tyr), resulting in the hypermodified nucleoside queuosine (7-(((4,5-cis-dihydroxy-2-cyclopenten-1-yl)amino)methyl)-7-deazaguanosine). Catalysis occurs through a double-displacement mechanism. The nucleophile active site attacks the C1' of nucleotide 34 to detach the guanine base from the RNA, forming a covalent enzyme-RNA intermediate. The proton acceptor active site deprotonates the incoming queuine, allowing a nucleophilic attack on the C1' of the ribose to form the product. Modification of cytoplasmic tRNAs with queuosine controls the elongation speed of cognate codons, thereby ensuring the correct folding of nascent proteins to maintain proteome integrity. This Mus musculus (Mouse) protein is Queuine tRNA-ribosyltransferase catalytic subunit 1.